A 1079-amino-acid polypeptide reads, in one-letter code: MEDEAVLDRGASFLKHVCDEEEVEGHHTIYIGVHVPKSYRRRRRHKRKAGHKEKKEKERISENYSDKSDVENADESSSSILKPLISPAAERIRFILGEEDDSPAPPQLFTELDELLAVDGQEMEWKETARWIKFEEKVEQGGERWSKPHVATLSLHSLFELRTCMEKGSIMLDREASSLPQLVEMIADHQIETGLLKPDLKDKVTYTLLRKHRHQTKKSNLRSLADIGKTVSSASRMFSNPDNGSPAMTHRNLTSSSLNDISDKPEKDQLKNKFMKKLPRDAEASNVLVGEVDFLDTPFIAFVRLQQAVMLGALTEVPVPTRFLFILLGPKGKAKSYHEIGRAIATLMSDEVFHDIAYKAKDRHDLIAGIDEFLDEVIVLPPGEWDPAIRIEPPKSLPSSDKRKNMYSGGENVQMNGDTPHDGGHGGGGHGDCEELQRTGRFCGGLIKDIKRKAPFFASDFYDALNIQALSAILFIYLATVTNAITFGGLLGDATDNMQGVLESFLGTAVSGAIFCLFAGQPLTILSSTGPVLVFERLLFNFSKDHSFDYLEFRLWIGLWSAFMCLILVATDASFLVQYFTRFTEEGFSSLISFIFIYDAFKKMIKLADYYPINSDFRVGYNTHFSCACLPPDPVNLSVSNDTTLAPEDLPTVSSTDMYHNATFDWAYLSKKECVKFGGKLVGNNCDFVPDITLMSFILFLGTYTSSMAMKKFKTSRYFPTTARKLISDFAIILSILIFCVIDALVGVDTPKLIVPSEFKPTSPHRGWFVPPFGGNPWWVCLAAAIPALLVTILIFMDQQITAVIVNRKEHKLKKGAGYHLDLFWVAILMVVCSFMALPWYVAATVISIAHIDSLKMETETSAPGEQPKFLGVREQRVTGTLVFILTGLSVFMAPILKFIPMPVLYGVFLYMGVASLNGVQFMDRLKLLLMPLKHQPDFIYLRHVPLRRVHLFTSLQVLCLALLWILKSTVAAIIFPVMILALVAVRKGMDYLFSQHDLSFLDDVIPEKDKKKKEDEKKKKKKKGSLDSDNDDSDCPYSEKVPSIKIPMDITEQQPFLSDNKPLDRERSSTFLERHTSC.

Residues 1–62 form a required for interaction with AHCYL1 region; it reads MEDEAVLDRG…EKKEKERISE (62 aa). The Cytoplasmic portion of the chain corresponds to 1–466; that stretch reads MEDEAVLDRG…FASDFYDALN (466 aa). Glu2 bears the Phosphoserine mark. Tyr30 is modified (phosphotyrosine). Basic residues predominate over residues 39 to 52; sequence YRRRRRHKRKAGHK. The segment at 39 to 78 is disordered; that stretch reads YRRRRRHKRKAGHKEKKEKERISENYSDKSDVENADESSS. Basic and acidic residues predominate over residues 53-70; that stretch reads EKKEKERISENYSDKSDV. Phosphoserine is present on residues Ser61, Ser65, Ser68, Ser223, Ser232, Ser233, and Ser245. Residues 235–266 form a disordered region; the sequence is SRMFSNPDNGSPAMTHRNLTSSSLNDISDKPE. Phosphothreonine occurs at positions 249 and 254. Residues 251–260 show a composition bias toward polar residues; it reads RNLTSSSLND. Residues Ser256, Ser257, and Ser262 each carry the phosphoserine modification. The chain crosses the membrane as a helical span at residues 467–491; sequence IQALSAILFIYLATVTNAITFGGLL. Residues 492–501 lie on the Extracellular side of the membrane; the sequence is GDATDNMQGV. Residues 502-520 traverse the membrane as a helical segment; the sequence is LESFLGTAVSGAIFCLFAG. Position 521 (Gln521) is a topological domain, cytoplasmic. Residues 522–542 traverse the membrane as a discontinuously helical segment; that stretch reads PLTILSSTGPVLVFERLLFNF. Topologically, residues 543-550 are extracellular; sequence SKDHSFDY. The chain crosses the membrane as a helical span at residues 551 to 571; sequence LEFRLWIGLWSAFMCLILVAT. The Cytoplasmic portion of the chain corresponds to 572-585; that stretch reads DASFLVQYFTRFTE. The chain crosses the membrane as a helical span at residues 586–609; that stretch reads EGFSSLISFIFIYDAFKKMIKLAD. 2 N-linked (GlcNAc) asparagine glycosylation sites follow: Ile597 and Phe617. Residues 610-692 are Extracellular-facing; the sequence is YYPINSDFRV…GNNCDFVPDI (83 aa). Residues 693-710 traverse the membrane as a helical segment; sequence TLMSFILFLGTYTSSMAM. Over 711-725 the chain is Cytoplasmic; the sequence is KKFKTSRYFPTTARK. Residues 726–745 traverse the membrane as a helical segment; it reads LISDFAIILSILIFCVIDAL. At 746–779 the chain is on the extracellular side; that stretch reads VGVDTPKLIVPSEFKPTSPHRGWFVPPFGGNPWW. An interaction with CA4 region spans residues 748-779; sequence VDTPKLIVPSEFKPTSPHRGWFVPPFGGNPWW. Residues 780 to 807 traverse the membrane as a helical segment; that stretch reads VCLAAAIPALLVTILIFMDQQITAVIVN. At 808–819 the chain is on the cytoplasmic side; the sequence is RKEHKLKKGAGY. Residues 820 to 836 form a helical membrane-spanning segment; the sequence is HLDLFWVAILMVVCSFM. Ala837 is a topological domain (extracellular). The discontinuously helical transmembrane segment at 838–855 threads the bilayer; it reads LPWYVAATVISIAHIDSL. The Cytoplasmic segment spans residues 856-877; sequence KMETETSAPGEQPKFLGVREQR. A helical transmembrane segment spans residues 878-894; the sequence is VTGTLVFILTGLSVFMA. Residues 895–901 are Extracellular-facing; the sequence is PILKFIP. Residues 902–918 traverse the membrane as a helical segment; the sequence is MPVLYGVFLYMGVASLN. The Cytoplasmic segment spans residues 919-960; it reads GVQFMDRLKLLLMPLKHQPDFIYLRHVPLRRVHLFTSLQVLC. Positions 961–986 form an intramembrane region, discontinuously helical; sequence LALLWILKSTVAAIIFPVMILALVAV. The Cytoplasmic segment spans residues 987–1079; it reads RKGMDYLFSQ…STFLERHTSC (93 aa). The interval 1002 to 1004 is CA2-binding; the sequence is LDD. A disordered region spans residues 1012-1079; the sequence is KKKEDEKKKK…STFLERHTSC (68 aa). A phosphoserine mark is found at Ser1026 and Ser1029. Position 1026 is a phosphoserine; by PKA (Ser1026). The tract at residues 1030 to 1033 is CA2-binding; the sequence is DNDD. Phosphoserine occurs at positions 1034 and 1044. Positions 1057 to 1059 are required for basolateral targeting; that stretch reads FLS. 4 positions are modified to phosphoserine: Asp1060, Leu1064, Ser1069, and Ser1078. Basic and acidic residues predominate over residues 1062 to 1079; that stretch reads KPLDRERSSTFLERHTSC.

Belongs to the anion exchanger (TC 2.A.31) family. As to quaternary structure, homodimer. Interacts with CA2/carbonic anhydrase 2 and CA4/carbonic anhydrase 4 which may regulate transporter activity. Isoform 1 but not isoform 2 interacts with AHCYL1 (via PEST domain when phosphorylated); the interaction increases SLC4A4 isoform 1 activity. Interacts with AHCYL2. Post-translationally, phosphorylation of Ser-1026 by PKA increases the binding of CA2 and changes the Na(+):HCO3(-) stoichiometry of the transporter from 3:1 to 2:1. Phosphorylated in presence of STK39 and dephosphorylated in presence of PP1 phosphatase; phosphorylation seems to inhibit SLC4A4 activity. In terms of processing, N-glycosylation is not necessary for the transporter basic functions. In terms of tissue distribution, specifically expressed in kidney and to a lower extent in liver, lung, spleen, brain, skeletal muscle and heart. In kidney, expressed in proximal tubules at the corticomedullary junction. Isoform 2 is specifically expressed in kidney. Isoform 1 is expressed in kidney and pancreas while isoform 3 is specifically expressed in brain (at protein level). In brain, isoform 1 is expressed in astrocytes while isoform 3 is expressed in neurons (at protein level). In the eye, isoform 1 is expressed in cornea, conjunctiva, lens epithelium, ciliary bodies and retina while isoform 2 is detected only in the conjunctiva.

It localises to the basolateral cell membrane. The protein localises to the cell membrane. It carries out the reaction 2 hydrogencarbonate(out) + Na(+)(out) = 2 hydrogencarbonate(in) + Na(+)(in). The catalysed reaction is 3 hydrogencarbonate(out) + Na(+)(out) = 3 hydrogencarbonate(in) + Na(+)(in). Inhibited by 4,4'-diisothiocyanatostilbene-2,2'-disulfonic acid (DIDS). Functionally, electrogenic sodium/bicarbonate cotransporter with a Na(+):HCO3(-) stoichiometry varying from 1:2 to 1:3. May regulate bicarbonate influx/efflux at the basolateral membrane of cells and regulate intracellular pH. This chain is Electrogenic sodium bicarbonate cotransporter 1 (Slc4a4), found in Rattus norvegicus (Rat).